The primary structure comprises 61 residues: Temporin-MT3 (61 aa).

A signal peptide spans Met-1–Cys-22. A propeptide spans Glu-23–Glu-44 (removed in mature form). At Leu-59 the chain carries Leucine amide.

Belongs to the frog skin active peptide (FSAP) family. Temporin subfamily. Expressed by the skin glands.

The protein localises to the secreted. Antimicrobial peptide. The protein is Temporin-MT3 of Amolops mantzorum (Sichuan torrent frog).